Consider the following 178-residue polypeptide: Ribosome maturation factor RimM (178 aa).

Positions Glu-95–Ile-174 constitute a PRC barrel domain.

This sequence belongs to the RimM family. In terms of assembly, binds ribosomal protein uS19.

The protein resides in the cytoplasm. An accessory protein needed during the final step in the assembly of 30S ribosomal subunit, possibly for assembly of the head region. Essential for efficient processing of 16S rRNA. May be needed both before and after RbfA during the maturation of 16S rRNA. It has affinity for free ribosomal 30S subunits but not for 70S ribosomes. This is Ribosome maturation factor RimM from Sulfurovum sp. (strain NBC37-1).